A 281-amino-acid polypeptide reads, in one-letter code: Pantothenate synthetase (281 aa).

30–37 (MGYLHEGH) lines the ATP pocket. His-37 acts as the Proton donor in catalysis. Gln-61 is a binding site for (R)-pantoate. Residue Gln-61 participates in beta-alanine binding. Position 147–150 (147–150 (GEKD)) interacts with ATP. Residue Gln-153 participates in (R)-pantoate binding. Residues Val-176 and 184 to 187 (MSSR) contribute to the ATP site.

This sequence belongs to the pantothenate synthetase family. In terms of assembly, homodimer.

It is found in the cytoplasm. It catalyses the reaction (R)-pantoate + beta-alanine + ATP = (R)-pantothenate + AMP + diphosphate + H(+). It functions in the pathway cofactor biosynthesis; (R)-pantothenate biosynthesis; (R)-pantothenate from (R)-pantoate and beta-alanine: step 1/1. Its function is as follows. Catalyzes the condensation of pantoate with beta-alanine in an ATP-dependent reaction via a pantoyl-adenylate intermediate. In Desulfatibacillum aliphaticivorans, this protein is Pantothenate synthetase.